The sequence spans 105 residues: MAGRTVTRADLCEAVYQQVGLSRTESAQLVEMVLKEIADCLARGETVKLSSFGSFVVREKGERVGRNPKTGEEVPIEPRRVMVFKPSSILKHRINGTVGDGLDED.

This sequence belongs to the bacterial histone-like protein family. Heterodimer of an alpha and a beta chain.

This protein is one of the two subunits of integration host factor, a specific DNA-binding protein that functions in genetic recombination as well as in transcriptional and translational control. The protein is Integration host factor subunit alpha of Xanthobacter autotrophicus (strain ATCC BAA-1158 / Py2).